Consider the following 30-residue polypeptide: GLPCGESCVYIPCISTVLGCSCSNKVCYRD.

The segment at residues 1–30 is a cross-link (cyclopeptide (Gly-Asp)); that stretch reads GLPCGESCVYIPCISTVLGCSCSNKVCYRD. Disulfide bonds link Cys-4–Cys-20, Cys-8–Cys-22, and Cys-13–Cys-27.

Post-translationally, this is a cyclic peptide. Detected in stems (at protein level).

Functionally, probably participates in a plant defense mechanism. The sequence is that of Cyclotide hyen-G from Pigea enneasperma (Spade flower).